The sequence spans 381 residues: Probable peptidoglycan glycosyltransferase FtsW (381 aa).

Topologically, residues 1–15 are cytoplasmic; the sequence is MNNKKKIVKIFFYDK. A helical membrane pass occupies residues 16–36; the sequence is ILFFLLISLSIIGIIIVSSAS. The Periplasmic portion of the chain corresponds to 37-53; the sequence is ISFGIRLHNDYFYFAKR. A helical transmembrane segment spans residues 54-74; the sequence is NLLYFFLSFFLFFQIIRIPIN. Topologically, residues 75 to 81 are cytoplasmic; the sequence is QLEKYNK. Residues 82 to 102 form a helical membrane-spanning segment; the sequence is IALLINLFLLIIVFIIGNSIN. Topologically, residues 103–109 are periplasmic; it reads GAIRWIK. A helical membrane pass occupies residues 110–130; the sequence is IGFFSIQPSECSKLILFFYIS. The Cytoplasmic portion of the chain corresponds to 131-143; the sequence is DYIVKKNKELKNK. The helical transmembrane segment at 144-164 threads the bilayer; that stretch reads LWGFLKPIIIMLIFVILLLMQ. Residues 165–166 lie on the Periplasmic side of the membrane; that stretch reads PD. Helical transmembrane passes span 167–187 and 188–208; these read LGNS…AGIN and LWKC…LIIF. Residues 209–278 lie on the Periplasmic side of the membrane; the sequence is KPYRIRRILS…FSILGEELGY (70 aa). The helical transmembrane segment at 279-299 threads the bilayer; that stretch reads IGSIIILIMLFFVIFRIFLIG. Over 300-317 the chain is Cytoplasmic; that stretch reads KNSFIQKKFFSGYFSFSV. Residues 318–338 form a helical membrane-spanning segment; the sequence is GIWISLQTIMNVGGVIGILPI. At 339 to 343 the chain is on the periplasmic side; the sequence is KGLTL. A helical transmembrane segment spans residues 344–364; sequence PFISYGGSSLITIFSAIAIVI. The Cytoplasmic portion of the chain corresponds to 365-381; sequence RSDFELRINKYQAYLKQ.

It belongs to the SEDS family. FtsW subfamily.

It localises to the cell inner membrane. It catalyses the reaction [GlcNAc-(1-&gt;4)-Mur2Ac(oyl-L-Ala-gamma-D-Glu-L-Lys-D-Ala-D-Ala)](n)-di-trans,octa-cis-undecaprenyl diphosphate + beta-D-GlcNAc-(1-&gt;4)-Mur2Ac(oyl-L-Ala-gamma-D-Glu-L-Lys-D-Ala-D-Ala)-di-trans,octa-cis-undecaprenyl diphosphate = [GlcNAc-(1-&gt;4)-Mur2Ac(oyl-L-Ala-gamma-D-Glu-L-Lys-D-Ala-D-Ala)](n+1)-di-trans,octa-cis-undecaprenyl diphosphate + di-trans,octa-cis-undecaprenyl diphosphate + H(+). Its pathway is cell wall biogenesis; peptidoglycan biosynthesis. In terms of biological role, peptidoglycan polymerase that is essential for cell division. This chain is Probable peptidoglycan glycosyltransferase FtsW, found in Wigglesworthia glossinidia brevipalpis.